The chain runs to 348 residues: MRALSKQQPGEGIWMIETEVPTPGPNDLLIRIRKGSICGTDVHIYKWDDWASQTVPVPMVVGHEYVGVVAGMGSEVRGFEIGDRVSGEGHVTCGHCRNCRAGRRHLCRNTQGVGVNRPGSFAEYLVLPAFNAFKLPDDIPDDVAAIFDPFGNAVHTALSFDLVGEDVLITGAGPIGCMAAAVARHVGARNVVITDVNDYRLDLARQMGVTRAVNVAREDLWTVATQELDMHEGFDVGMEMSGSGPAFAQMVSVMNNGGKVALLGIPSGEVQIDWNAVIFKMLTIKGIYGREMFETWYKMAALIQSGLDLTPVITHHYGIGDFQQGFDAMLSGQSGKVILDWETEEQSA.

Cys38 contacts Zn(2+). Catalysis depends on charge relay system residues Thr40 and His43. Residues His63, Glu64, Cys93, Cys96, Cys99, and Cys107 each contribute to the Zn(2+) site. NAD(+)-binding positions include Ile175, Asp195, Arg200, 263–265 (LGI), and 287–288 (IY).

It belongs to the zinc-containing alcohol dehydrogenase family. As to quaternary structure, homotetramer. Requires Zn(2+) as cofactor.

Its subcellular location is the cytoplasm. The enzyme catalyses L-threonine + NAD(+) = (2S)-2-amino-3-oxobutanoate + NADH + H(+). The protein operates within amino-acid degradation; L-threonine degradation via oxydo-reductase pathway; glycine from L-threonine: step 1/2. Its function is as follows. Catalyzes the NAD(+)-dependent oxidation of L-threonine to 2-amino-3-ketobutyrate. This Deinococcus radiodurans (strain ATCC 13939 / DSM 20539 / JCM 16871 / CCUG 27074 / LMG 4051 / NBRC 15346 / NCIMB 9279 / VKM B-1422 / R1) protein is L-threonine 3-dehydrogenase.